Here is a 194-residue protein sequence, read N- to C-terminus: MTTGKIYFATTNLKKLNEVKEFLKTDIDHMRISMTEIQGPSEKIVEHKLDQAAPFINPKDAVIVDDTSFSLEALGGFPGVYVKDFLEIGTRKIWEIVEKIGNKSATAVCSLGIAHYENGEIVKKVFSGKLKGSITEPEKDCKTEFGYIFIPDGFNGVLKNMPTDEKNRISHRGIASRSLAAYMASKGIIKTHGP.

Position 10 to 15 (10 to 15 (TTNLKK)) interacts with ITP. E36 is a Mg(2+) binding site. ITP is bound by residues K48, 66–67 (DT), K83, K166, and 171–172 (HR).

Belongs to the HAM1 NTPase family. Homodimer. Mg(2+) is required as a cofactor. Mn(2+) serves as cofactor.

It localises to the cytoplasm. It is found in the nucleus. The catalysed reaction is ITP + H2O = IMP + diphosphate + H(+). The enzyme catalyses dITP + H2O = dIMP + diphosphate + H(+). It catalyses the reaction XTP + H2O = XMP + diphosphate + H(+). In terms of biological role, pyrophosphatase that hydrolyzes non-canonical purine nucleotides such as inosine triphosphate (ITP), deoxyinosine triphosphate (dITP) or xanthosine 5'-triphosphate (XTP) to their respective monophosphate derivatives. The enzyme does not distinguish between the deoxy- and ribose forms. Probably excludes non-canonical purines from RNA and DNA precursor pools, thus preventing their incorporation into RNA and DNA and avoiding chromosomal lesions. The protein is Inosine triphosphate pyrophosphatase of Encephalitozoon intestinalis (strain ATCC 50506) (Microsporidian parasite).